Consider the following 418-residue polypeptide: Hepatic and glial cell adhesion molecule (418 aa).

The N-terminal stretch at 1 to 33 (MKREREAPSRAFSALRLAPFVYLLLIQTEPLEG) is a signal peptide. An Ig-like V-type domain is found at 34–141 (VNITSPVRLI…TGEKTINLTV (108 aa)). Residues 34 to 240 (VNITSPVRLI…VKITVYRRSS (207 aa)) are Extracellular-facing. N-linked (GlcNAc...) asparagine glycosylation is found at Asn35, Asn138, Asn167, and Asn189. Positions 148 to 234 (PQVLVASTTV…QGRSPPVKIT (87 aa)) constitute an Ig-like C2-type domain. Cys168 and Cys217 are disulfide-bonded. The helical transmembrane segment at 241 to 261 (LYIILSTGGIFLLVTLVTVCA) threads the bilayer. Residues 262 to 418 (CWKPSKKSGK…DEAGPVEISA (157 aa)) lie on the Cytoplasmic side of the membrane. Residues 271–418 (KKRKLEKQNS…DEAGPVEISA (148 aa)) form a disordered region. At Ser280 the chain carries Phosphoserine. Positions 287 to 308 (SDDRLKPEADTLPRSGEQERKN) are enriched in basic and acidic residues. 2 positions are modified to phosphoserine: Ser352 and Ser379. Over residues 385 to 400 (GSPGRSRSASRTLRTA) the composition is skewed to low complexity.

Homodimer. Dimer formation occurs predominantly through cis interactions on the cell surface. Part of a complex containing MLC1, TRPV4, AQP4 and ATP1B1. Interacts with CLCN2. In terms of processing, N-glycosylated.

It is found in the cytoplasm. Its subcellular location is the cell membrane. Its function is as follows. Involved in regulating cell motility and cell-matrix interactions. May inhibit cell growth through suppression of cell proliferation. In glia, associates and targets CLCN2 at astrocytic processes and myelinated fiber tracts where it may regulate transcellular chloride flux involved in neuron excitability. The chain is Hepatic and glial cell adhesion molecule from Bos taurus (Bovine).